The primary structure comprises 409 residues: MFVQEEKIFAGKVLRLHICAADGSEWLEEATEDTSVEKLKESCLKHGAHGSLEDPKNVTHHKLIHAASERVLSDSKTILEENIQDQDVLLLIKKRAPSPIPKMADVSAEEKKKQEQKAPDKDAILRATANLPACSTDRTAVQTTMRDFQTELRKILVSLIEVAQKLLALNPDAVELFKKANAMLDEDEDERVDETALRQLTEMGFPESRASKALRLNHMSVPQAMEWLIEHSEDPAIDTPLPGHAAQAEASAAAATSSSSSEAAVGTSVEDEESRDELTEIFKKIRRKKEFRADARAVISLMEMGFDEKEVIDALRVNNNQQNAACEWLLGDRKPSPEELDQGIDPNSPLFQAILDNPVVQLGLTNPKTLLAFEDMLENPLNSTQWMNDPETGPVMLQISRIFQTLNRT.

Met-1 carries the N-acetylmethionine modification. In terms of domain architecture, Ubiquitin-like spans 14 to 98 (LRLHICAADG…LLLIKKRAPS (85 aa)). The UBA 1 domain occupies 187-231 (DEDERVDETALRQLTEMGFPESRASKALRLNHMSVPQAMEWLIEH). The tract at residues 235–273 (PAIDTPLPGHAAQAEASAAAATSSSSSEAAVGTSVEDEE) is disordered. The span at 245 to 264 (AAQAEASAAAATSSSSSEAA) shows a compositional bias: low complexity. The UBA 2 domain occupies 292–332 (RADARAVISLMEMGFDEKEVIDALRVNNNQQNAACEWLLGD). The STI1 domain occupies 357–396 (NPVVQLGLTNPKTLLAFEDMLENPLNSTQWMNDPETGPVM).

As to quaternary structure, component of the KPC complex composed of RNF123/KPC1 and UBAC1/KPC2. Interacts (via ubiquitin-like domain) with RNF123. Interacts (via ubiquitin-like and UBA domains) with the proteasome via its N-terminal domain.

The protein resides in the cytoplasm. It functions in the pathway protein modification; protein ubiquitination. Functionally, non-catalytic component of the KPC complex, a E3 ubiquitin-protein ligase complex that mediates polyubiquitination of target proteins, such as CDKN1B and NFKB1. The KPC complex catalyzes polyubiquitination and proteasome-mediated degradation of CDKN1B during G1 phase of the cell cycle. The KPC complex also acts as a key regulator of the NF-kappa-B signaling by promoting maturation of the NFKB1 component of NF-kappa-B by catalyzing ubiquitination of the NFKB1 p105 precursor. Within the KPC complex, UBAC1 acts as an adapter that promotes the transfer of target proteins that have been polyubiquitinated by RNF123/KPC1 to the 26S proteasome. This chain is Ubiquitin-associated domain-containing protein 1 (Ubac1), found in Rattus norvegicus (Rat).